The following is a 222-amino-acid chain: Cytidylate kinase (222 aa).

Residue 10–18 coordinates ATP; sequence GPAGSGKSS.

The protein belongs to the cytidylate kinase family. Type 1 subfamily.

The protein localises to the cytoplasm. It catalyses the reaction CMP + ATP = CDP + ADP. It carries out the reaction dCMP + ATP = dCDP + ADP. In Acholeplasma laidlawii (strain PG-8A), this protein is Cytidylate kinase.